The sequence spans 218 residues: Glutathione S-transferase D7 (218 aa).

In terms of domain architecture, GST N-terminal spans Met1–Glu82. Residues Ser11, His52–Ile54, and Glu66–Arg68 contribute to the glutathione site. In terms of domain architecture, GST C-terminal spans Asp88–Thr207.

Belongs to the GST superfamily. Theta family. Homodimer.

The enzyme catalyses RX + glutathione = an S-substituted glutathione + a halide anion + H(+). In terms of biological role, conjugation of reduced glutathione to a wide number of exogenous and endogenous hydrophobic electrophiles. This Anopheles gambiae (African malaria mosquito) protein is Glutathione S-transferase D7.